A 210-amino-acid polypeptide reads, in one-letter code: RNA chaperone ProQ (210 aa).

A compositionally biased stretch (basic and acidic residues) spans 98–127 (HAKASLEESKAKVAARRKEQAKKAREEAKA). The segment at 98 to 155 (HAKASLEESKAKVAARRKEQAKKAREEAKAKKPARATTPPKRRPQPAAVAKKQEKPVE) is disordered.

It belongs to the ProQ family.

The protein localises to the cytoplasm. Its function is as follows. RNA chaperone with significant RNA binding, RNA strand exchange and RNA duplexing activities. The sequence is that of RNA chaperone ProQ from Aliivibrio salmonicida (strain LFI1238) (Vibrio salmonicida (strain LFI1238)).